The following is a 188-amino-acid chain: MTETHTTGVRGDSGRETAELVASRVLDVPDFPKPGVMFKDLMPLFSDGDAFREVIDDIVRYHGRDSFDTVVGIEARGFVVAAAIAYAAGVGVVPVRKAGKLPRVAYSASYALEYGEATLEVHQDAFTAGHRVLVVDDVLATGGTAEATLDLVERAGGTVAGFTVLLELGFLGGRERLTPRPVHALLTV.

It belongs to the purine/pyrimidine phosphoribosyltransferase family. Homodimer.

The protein localises to the cytoplasm. The catalysed reaction is AMP + diphosphate = 5-phospho-alpha-D-ribose 1-diphosphate + adenine. It functions in the pathway purine metabolism; AMP biosynthesis via salvage pathway; AMP from adenine: step 1/1. Catalyzes a salvage reaction resulting in the formation of AMP, that is energically less costly than de novo synthesis. This chain is Adenine phosphoribosyltransferase, found in Salinispora tropica (strain ATCC BAA-916 / DSM 44818 / JCM 13857 / NBRC 105044 / CNB-440).